The chain runs to 205 residues: Phosphoheptose isomerase (205 aa).

Residues 38–200 (LAVRLALGSK…LFEAVGELEP (163 aa)) form the SIS domain. Residue 53–55 (NGG) participates in substrate binding. His-62 and Glu-66 together coordinate Zn(2+). Substrate contacts are provided by residues Glu-66, 95 to 96 (ND), 121 to 123 (STS), Ser-126, and Gln-173. Positions 173 and 181 each coordinate Zn(2+).

This sequence belongs to the SIS family. GmhA subfamily. In terms of assembly, homotetramer. The cofactor is Zn(2+).

It is found in the cytoplasm. The catalysed reaction is 2 D-sedoheptulose 7-phosphate = D-glycero-alpha-D-manno-heptose 7-phosphate + D-glycero-beta-D-manno-heptose 7-phosphate. It participates in carbohydrate biosynthesis; D-glycero-D-manno-heptose 7-phosphate biosynthesis; D-glycero-alpha-D-manno-heptose 7-phosphate and D-glycero-beta-D-manno-heptose 7-phosphate from sedoheptulose 7-phosphate: step 1/1. Its function is as follows. Catalyzes the isomerization of sedoheptulose 7-phosphate in D-glycero-D-manno-heptose 7-phosphate. This is Phosphoheptose isomerase from Maridesulfovibrio salexigens (strain ATCC 14822 / DSM 2638 / NCIMB 8403 / VKM B-1763) (Desulfovibrio salexigens).